The primary structure comprises 2055 residues: Citron Rho-interacting kinase (2055 aa).

M1 is modified (N-acetylmethionine). Residues 97–359 enclose the Protein kinase domain; that stretch reads FEVRSLVGCG…FEGLCCHPFF (263 aa). Residues 103 to 111 and K126 contribute to the ATP site; that span reads VGCGHFAEV. Catalysis depends on D221, which acts as the Proton acceptor. One can recognise an AGC-kinase C-terminal domain in the interval 360–430; sequence ARTDWNNIRN…SKALGYLGRS (71 aa). Phosphoserine occurs at positions 432, 439, 479, and 581. Coiled-coil stretches lie at residues 441 to 1086, 1091 to 1247, and 1275 to 1325; these read AKVS…QWEA, LGDE…VLYS, and AKKK…RKAT. The interval 1132 to 1328 is interaction with Rho/Rac; the sequence is LAVKEHKAEI…AAHRKATDHP (197 aa). Position 1237 is a phosphotyrosine (Y1237). Over residues 1316–1329 the composition is skewed to basic and acidic residues; it reads REEAAHRKATDHPH. Disordered stretches follow at residues 1316 to 1336 and 1348 to 1377; these read REEA…PATA and SPEH…EFSR. Positions 1353-1363 are enriched in low complexity; that stretch reads PSAMSLLAPPS. Basic and acidic residues predominate over residues 1365 to 1377; the sequence is RRKESSTPEEFSR. A Phorbol-ester/DAG-type zinc finger spans residues 1388–1437; that stretch reads PHRFNVGLNMRATKCAVCLDTVHFGRQASKCLECQVMCHPKCSTCLPATC. Residues 1469-1589 form the PH domain; that stretch reads SLHLEGWMKV…WVTALESVVA (121 aa). The region spanning 1617-1907 is the CNH domain; it reads RLDMNCTLPF…RYLGPAISSG (291 aa). K1747 bears the N6-acetyllysine mark. The tract at residues 1932–2040 is disordered; it reads SGTEQHRVPS…RGRLPAGAVR (109 aa). Positions 1939–1948 are enriched in polar residues; sequence VPSTSRSSPN. S1966 bears the Phosphoserine mark. Over residues 1974-2031 the composition is skewed to basic and acidic residues; sequence SHPREPSTPHRYRDREGRTELRRDKSPGRPLEREKSPGRMLSTRRERSPGRLFEDSSR. The short motif at 1979-1984 is the SH3-binding element; sequence PSTPHR. Position 2021 is a phosphoserine (S2021). T2041 is subject to Phosphothreonine.

Belongs to the protein kinase superfamily. AGC Ser/Thr protein kinase family. As to quaternary structure, interacts with TTC3. Homodimer. Directly interacts with KIF14 depending on the activation state (stronger interaction with the kinase-dead form). In terms of tissue distribution, a major signal was observed in testis and brain, but it was also detected in thymus, spleen, kidney, heart and lung.

It is found in the cytoplasm. The enzyme catalyses L-seryl-[protein] + ATP = O-phospho-L-seryl-[protein] + ADP + H(+). The catalysed reaction is L-threonyl-[protein] + ATP = O-phospho-L-threonyl-[protein] + ADP + H(+). Its function is as follows. Plays a role in cytokinesis. Required for KIF14 localization to the central spindle and midbody. Probable RHO/RAC effector that binds to the GTP-bound forms of RHO and RAC1. It probably binds p21 with a tighter specificity in vivo. Displays serine/threonine protein kinase activity. Plays an important role in the regulation of cytokinesis and the development of the central nervous system. Phosphorylates MYL9/MLC2. In Mus musculus (Mouse), this protein is Citron Rho-interacting kinase (Cit).